The chain runs to 419 residues: Gustatory receptor for bitter taste 93a (419 aa).

Over 1–55 (MFSSSSAMTGKRAESWSRLLLLWLYRCARGLLVLSSSLDRDKLQLKATKQGSRNR) the chain is Cytoplasmic. A helical transmembrane segment spans residues 56-76 (FLHILWRCIVVMIYAGLWPML). At 77–90 (TSAVIGKRLESYAD) the chain is on the extracellular side. The helical transmembrane segment at 91 to 111 (VLALAQSMSVSILAVISFVIQ) threads the bilayer. The Cytoplasmic portion of the chain corresponds to 112 to 145 (ARGENQFREVLNRYLALYQRICLTTRLRHLFPTK). The chain crosses the membrane as a helical span at residues 146 to 166 (FVVFFLLKLFFTLCGCFHEII). Residues 167–184 (PLFENSHFDDISQMVGTG) are Extracellular-facing. Residues 185 to 205 (FGIYMWLGTLCVLDACFLGFL) traverse the membrane as a helical segment. The Cytoplasmic portion of the chain corresponds to 206 to 277 (VSGILYEHMA…NSFRRILQWQ (72 aa)). The chain crosses the membrane as a helical span at residues 278–298 (ILFYIYLNFINICLMLYQYIL). At 299 to 305 (HFLNDDE) the chain is on the extracellular side. The chain crosses the membrane as a helical span at residues 306 to 326 (VVFVSIVMAFVKLANLVLLMM). The Cytoplasmic portion of the chain corresponds to 327–383 (CADYTVRQSEVPKKLPLDIVCSDMDERWDKSVETFLGQLQTQRLEIKVLGFFHLNNE). The helical transmembrane segment at 384 to 404 (FILLILSAIISYLFILIQFGI) threads the bilayer. Residues 405 to 419 (TGGFEASEDIKNRFD) lie on the Extracellular side of the membrane.

Belongs to the insect chemoreceptor superfamily. Gustatory receptor (GR) family. Gr93a subfamily. As to expression, in larvae, is expressed in neurons of the dorsal pharyngeal sense organs.

It is found in the cell membrane. In terms of biological role, gustatory receptor required for response to the bitter in taste neurons. Gr93a cells respond to bitter compounds such as caffeine. Flies avoid bitter substances, suggesting that Gr93a neuron activity is sufficient to mediate avoidance behavior. The chain is Gustatory receptor for bitter taste 93a (Gr93a) from Drosophila melanogaster (Fruit fly).